A 497-amino-acid chain; its full sequence is Glycerol kinase (497 aa).

Threonine 13 lines the ADP pocket. Positions 13, 14, and 15 each coordinate ATP. Threonine 13 provides a ligand contact to sn-glycerol 3-phosphate. Arginine 17 contacts ADP. 3 residues coordinate sn-glycerol 3-phosphate: arginine 83, glutamate 84, and tyrosine 135. Glycerol contacts are provided by arginine 83, glutamate 84, and tyrosine 135. At histidine 231 the chain carries Phosphohistidine; by HPr. Residue aspartate 245 coordinates sn-glycerol 3-phosphate. Glycerol-binding residues include aspartate 245 and glutamine 246. ADP contacts are provided by threonine 267 and glycine 310. Threonine 267, glycine 310, glutamine 314, and glycine 411 together coordinate ATP. Glycine 411 and asparagine 415 together coordinate ADP.

It belongs to the FGGY kinase family. Homotetramer and homodimer (in equilibrium). In terms of processing, the phosphoenolpyruvate-dependent sugar phosphotransferase system (PTS), including enzyme I, and histidine-containing protein (HPr) are required for the phosphorylation, which leads to the activation of the enzyme.

It catalyses the reaction glycerol + ATP = sn-glycerol 3-phosphate + ADP + H(+). The protein operates within polyol metabolism; glycerol degradation via glycerol kinase pathway; sn-glycerol 3-phosphate from glycerol: step 1/1. Its activity is regulated as follows. Activated by phosphorylation and inhibited by fructose 1,6-bisphosphate (FBP). Its function is as follows. Key enzyme in the regulation of glycerol uptake and metabolism. Catalyzes the phosphorylation of glycerol to yield sn-glycerol 3-phosphate. This chain is Glycerol kinase, found in Listeria monocytogenes serotype 4a (strain HCC23).